A 306-amino-acid polypeptide reads, in one-letter code: F-box/LRR-repeat protein At3g26922 (306 aa).

One can recognise an F-box domain in the interval Glu13–Ile73. LRR repeat units follow at residues Asp67–Phe93, Cys98–Val122, Cys138–Asn170, Val171–Arg196, Leu215–Gly243, and Ile263–Leu288.

The protein is F-box/LRR-repeat protein At3g26922 of Arabidopsis thaliana (Mouse-ear cress).